A 757-amino-acid polypeptide reads, in one-letter code: Serine/threonine-protein phosphatase 2A 56 kDa regulatory subunit delta isoform (757 aa).

Basic residues predominate over residues 1-11; it reads MMRGFKQRLIK. 2 disordered regions span residues 1 to 172 and 188 to 250; these read MMRG…EDHA and ISNA…NPDT. Residues 12 to 21 are compositionally biased toward low complexity; that stretch reads KTTGSSSSSS. A compositionally biased stretch (basic and acidic residues) spans 23-34; the sequence is KKKDKEKEKEKS. 3 stretches are compositionally biased toward low complexity: residues 35–66, 86–119, and 128–147; these read STTS…GSKS, SSTS…STKK, and QSKQ…SSSS. The span at 160–172 shows a compositional bias: basic and acidic residues; it reads TKDDKSTSGEDHA. Residues 197 to 216 are compositionally biased toward low complexity; it reads SSDVENGNSNNNNMNINTSN. Residues 217 to 228 are compositionally biased toward polar residues; sequence TQDANHASSQSI. Thr242 and Thr257 each carry phosphothreonine. Residues 734–757 are disordered; sequence SFNTASENNTLNEENENDCDSEIQ. Residues 746–757 are compositionally biased toward acidic residues; that stretch reads EENENDCDSEIQ.

The protein belongs to the phosphatase 2A regulatory subunit B family. In terms of assembly, PP2A consists of a common heterodimeric core enzyme, composed of a 36 kDa catalytic subunit (subunit C) and a 65 kDa constant regulatory subunit (PR65 or subunit A), that associates with a variety of regulatory subunits. Proteins that associate with the core dimer include three families of regulatory subunits B (the R2/B/PR55/B55, R3/B''/PR72/PR130/PR59 and R5/B'/B56 families), the 48 kDa variable regulatory subunit, viral proteins, and cell signaling molecules.

It localises to the cytoplasm. The protein resides in the nucleus. Its function is as follows. The B regulatory subunit might modulate substrate selectivity and catalytic activity, and might also direct the localization of the catalytic enzyme to a particular subcellular compartment. Multicopy suppressor of ROX3 and HSP60. The chain is Serine/threonine-protein phosphatase 2A 56 kDa regulatory subunit delta isoform (RTS1) from Saccharomyces cerevisiae (strain ATCC 204508 / S288c) (Baker's yeast).